The primary structure comprises 425 residues: UPF0229 protein SG1344 (425 aa).

The segment at 49 to 109 (GESVSIPNTD…GQGSVSQDGE (61 aa)) is disordered. Residues 50–59 (ESVSIPNTDI) are compositionally biased toward polar residues. Residues 77–90 (PGNDHFVQNDRIER) show a composition bias toward basic and acidic residues.

Belongs to the UPF0229 family.

This Sodalis glossinidius (strain morsitans) protein is UPF0229 protein SG1344.